Reading from the N-terminus, the 623-residue chain is Heterogeneous nuclear ribonucleoprotein Q (623 aa).

A2 carries the post-translational modification N-acetylalanine. At S159 the chain carries Phosphoserine. RRM domains are found at residues 162–241 (TEIF…ISVA), 243–325 (NRLF…WADP), and 338–408 (KVLF…FAKP). Residue K168 forms a Glycyl lysine isopeptide (Lys-Gly) (interchain with G-Cter in SUMO2) linkage. At K221 the chain carries N6-acetyllysine. Position 363 is an N6-acetyllysine (K363). Residue Y373 is modified to Phosphotyrosine. An interaction with APOBEC1 region spans residues 400–561 (NIEIVFAKPP…GARGGRGGNV (162 aa)). Asymmetric dimethylarginine; by PRMT1; alternate is present on R444. R444 is modified (omega-N-methylarginine; by PRMT1; alternate). Repeat copies occupy residues 448 to 450 (RGG), 451 to 453 (RGG), 460 to 464 (YYGYE), 469 to 472 (YYGY), 478 to 480 (RGG), and 485 to 488 (YYGY). The segment at 448-559 (RGGRGGYGYP…VRGARGGRGG (112 aa)) is 8 X 3 AA repeats of R-G-G. Residues 460 to 488 (YYGYEDYYDYYGYDYHNYRGGYEDPYYGY) are 3 X 4 AA repeats of Y-Y-G-Y. R496 is subject to Omega-N-methylarginine; by PRMT1. Residues 497–623 (GRGGRGARGA…YQDTFGQQWK (127 aa)) form a disordered region. Residues 498–500 (RGG) form a 1-4 repeat. Over residues 504 to 522 (RGAAPSRGRGAAPPRGRAG) the composition is skewed to low complexity. Asymmetric dimethylarginine; by PRMT1 is present on R510. Asymmetric dimethylarginine; by PRMT1; alternate is present on R518. R518 carries the omega-N-methylarginine; by PRMT1; alternate modification. Residues 518-549 (RGRAGYSQRGGPGSARGVRGARGGAQQQRGRG) are interaction with SMN. Residue R526 is modified to Asymmetric dimethylarginine; alternate. R526 is modified (omega-N-methylarginine; alternate). Residues 526–528 (RGG) form a 1-5 repeat. Asymmetric dimethylarginine; by PRMT1; alternate occurs at positions 536 and 539. An omega-N-methylarginine; by PRMT1; alternate mark is found at R536 and R539. Tandem repeats lie at residues 539–541 (RGG), 554–556 (RGG), and 557–559 (RGG). Residues 550 to 562 (VRGARGGRGGNVG) show a composition bias toward gly residues. A Bipartite nuclear localization signal motif is present at residues 564–578 (KRKADGYNQPDTKRR). The segment covering 580 to 595 (TNNQNWGSQPIAQQPL) has biased composition (polar residues). Residue S587 is modified to Phosphoserine. A Glycyl lysine isopeptide (Lys-Gly) (interchain with G-Cter in SUMO2) cross-link involves residue K607. Positions 611-623 (QEFYQDTFGQQWK) are enriched in polar residues.

In terms of assembly, identified in the spliceosome C complex. Component of the coding region determinant (CRD)-mediated complex, composed of DHX9, HNRNPU, IGF2BP1, SYNCRIP and YBX1. Identified in a mRNP complex, at least composed of DHX9, DDX3X, ELAVL1, HNRNPU, IGF2BP1, ILF3, PABPC1, PCBP2, PTBP2, STAU1, STAU2, SYNCRIP and YBX1. Identified in a mRNP granule complex, at least composed of ACTB, ACTN4, DHX9, ERG, HNRNPA1, HNRNPA2B1, HNRNPAB, HNRNPD, HNRNPL, HNRNPR, HNRNPU, HSPA1, HSPA8, IGF2BP1, ILF2, ILF3, NCBP1, NCL, PABPC1, PABPC4, PABPN1, RPLP0, RPS3, RPS3A, RPS4X, RPS8, RPS9, SYNCRIP, YBX1 and untranslated mRNAs. Interacts with GTPBP1. Isoform 1 is a component of the APOB mRNA editosome complex. Isoform 1 interacts with APOBEC1 and A1CF. Part of a complex associated with the FOS mCRD domain and consisting of PABPC1, PAIP1, CSDE1/UNR, HNRPD and SYNCRIP. Isoform 2 interacts with HNRPR. Interacts with POLR2A hyperphosphorylated C-terminal domain. Interacts with HABP4. Identified in a histone pre-mRNA complex, at least composed of ERI1, LSM11, SLBP, SNRPB, SYNCRIP and YBX1. Isoform 1 and isoform 2 interact with SMN. Isoform 2 interacts through its C-terminal domain with SYT7, SYT8 and SYT9. The non-phosphorylated and phosphorylated forms are colocalized with PAIP1 in polysomes. Post-translationally, phosphorylated on tyrosine. The membrane-bound form found in microsomes is phosphorylated in vitro by insulin receptor tyrosine kinase (INSR). Phosphorylation is inhibited upon binding to RNA, whereas the cytoplasmic form is poorly phosphorylated. In terms of tissue distribution, ubiquitous. Detected in heart, brain, spleen, lung, liver, skeletal muscle, adipocytes, kidney and testis.

The protein resides in the nucleus. The protein localises to the nucleoplasm. It is found in the microsome. Its subcellular location is the cytoplasm. Functionally, heterogeneous nuclear ribonucleoprotein (hnRNP) implicated in mRNA processing mechanisms. Component of the CRD-mediated complex that promotes MYC mRNA stability. Isoform 1 and isoform 2 are associated in vitro with pre-mRNA, splicing intermediates and mature mRNA protein complexes. Isoform 1 binds to apoB mRNA AU-rich sequences. Isoform 1 is part of the APOB mRNA editosome complex and may modulate the postranscriptional C to U RNA-editing of the APOB mRNA through either by binding to A1CF (APOBEC1 complementation factor), to APOBEC1 or to RNA itself. May be involved in translationally coupled mRNA turnover. Implicated with other RNA-binding proteins in the cytoplasmic deadenylation/translational and decay interplay of the FOS mRNA mediated by the major coding-region determinant of instability (mCRD) domain. Interacts in vitro preferentially with poly(A) and poly(U) RNA sequences. Isoform 2 may be involved in cytoplasmic vesicle-based mRNA transport through interaction with synaptotagmins. The polypeptide is Heterogeneous nuclear ribonucleoprotein Q (Syncrip) (Mus musculus (Mouse)).